Reading from the N-terminus, the 150-residue chain is MSTLEQKLTEIISAPVEALGYELVGIEFIRGRQSTLRIYIDSDDGITVDACADVSHQVSAVLDVEDPITVAYNLEVSSPGLDRPMFTAEHYTRYLGEEVTLVLRMAMQNRRKWQGIIKAVDGEMITVTVDGKDEVFALSNIQKANLVPHF.

This sequence belongs to the RimP family.

The protein localises to the cytoplasm. Required for maturation of 30S ribosomal subunits. This is Ribosome maturation factor RimP from Yersinia pestis bv. Antiqua (strain Antiqua).